The chain runs to 248 residues: N-acylneuraminate-9-phosphatase (248 aa).

Aspartate 12 serves as a coordination point for Mg(2+). Residues leucine 13, aspartate 14, threonine 131, asparagine 132, and lysine 164 each coordinate phosphate. Position 14 (aspartate 14) interacts with Mg(2+). Aspartate 189 is a Mg(2+) binding site.

This sequence belongs to the HAD-like hydrolase superfamily. NANP family. It depends on Mg(2+) as a cofactor.

The enzyme catalyses N-acetylneuraminate 9-phosphate + H2O = N-acetylneuraminate + phosphate. The catalysed reaction is N-glycoloylneuraminate 9-phosphate + H2O = N-glycoloylneuraminate + phosphate. Its pathway is amino-sugar metabolism; N-acetylneuraminate biosynthesis. Its activity is regulated as follows. Inhibited by calcium. Inhibited by vanadate, sodium orthovanadate and phosphonate. Its function is as follows. Catalyzes the dephosphorylation of N-acylneuraminate 9-phosphate (Neu5Ac-9-P) to N-acetylneuraminic acid (Neu5Ac or sialic acid). Can also use N-glycoloylneuraminate 9-phosphate as substrate. This chain is N-acylneuraminate-9-phosphatase, found in Homo sapiens (Human).